Here is a 94-residue protein sequence, read N- to C-terminus: Large ribosomal subunit protein uL23 (94 aa).

It belongs to the universal ribosomal protein uL23 family. As to quaternary structure, part of the 50S ribosomal subunit. Contacts protein L29, and trigger factor when it is bound to the ribosome.

Its function is as follows. One of the early assembly proteins it binds 23S rRNA. One of the proteins that surrounds the polypeptide exit tunnel on the outside of the ribosome. Forms the main docking site for trigger factor binding to the ribosome. This Geobacter sulfurreducens (strain ATCC 51573 / DSM 12127 / PCA) protein is Large ribosomal subunit protein uL23.